Here is an 81-residue protein sequence, read N- to C-terminus: Three-finger toxin 3FTx-Oxy6 (81 aa).

The signal sequence occupies residues 1-21 (MKTLLLSLVVMTIVYLDLGYT). Disulfide bonds link C24–C43, C36–C61, C65–C73, and C74–C79.

The protein belongs to the three-finger toxin family. Short-chain subfamily. Expressed by the venom gland.

The protein resides in the secreted. The sequence is that of Three-finger toxin 3FTx-Oxy6 from Oxyuranus microlepidotus (Inland taipan).